Here is a 145-residue protein sequence, read N- to C-terminus: Large ribosomal subunit protein uL15 (145 aa).

The disordered stretch occupies residues 20–54 (GRGMASGKGKTATRGHKGQNSRSGGGVRPGFEGGQ). Residues 42-52 (SGGGVRPGFEG) show a composition bias toward gly residues.

Belongs to the universal ribosomal protein uL15 family. As to quaternary structure, part of the 50S ribosomal subunit.

Binds to the 23S rRNA. The chain is Large ribosomal subunit protein uL15 from Mycoplasma mycoides subsp. mycoides SC (strain CCUG 32753 / NCTC 10114 / PG1).